The following is a 304-amino-acid chain: 33 kDa chaperonin (304 aa).

Disulfide bonds link cysteine 236/cysteine 238 and cysteine 269/cysteine 272.

The protein belongs to the HSP33 family. In terms of processing, under oxidizing conditions two disulfide bonds are formed involving the reactive cysteines. Under reducing conditions zinc is bound to the reactive cysteines and the protein is inactive.

It localises to the cytoplasm. In terms of biological role, redox regulated molecular chaperone. Protects both thermally unfolding and oxidatively damaged proteins from irreversible aggregation. Plays an important role in the bacterial defense system toward oxidative stress. The protein is 33 kDa chaperonin of Pelobacter propionicus (strain DSM 2379 / NBRC 103807 / OttBd1).